A 1092-amino-acid polypeptide reads, in one-letter code: Myelin regulatory factor (1092 aa).

At 1 to 730 (MDVEDENETL…CVSQRFLQAT (730 aa)) the chain is on the cytoplasmic side. 3 disordered regions span residues 145–168 (SYAA…PQQL), 187–210 (PPSR…SIHQ), and 258–282 (QQHG…TNTL). Residues 196-205 (PPHLQGPLPP) show a composition bias toward pro residues. The segment at residues 246-507 (AQQSQMLHQL…SNPGQFESDS (262 aa)) is a DNA-binding region (NDT80). Residues 553 to 662 (SDIRAKESVE…KLTDNLETRI (110 aa)) form the Peptidase S74 domain. A coiled-coil region spans residues 646–677 (GAVKELCKLTDNLETRIDELERWSHKLAKLRR). Residues 681-695 (MKSTNSHTGSSQFSR) are compositionally biased toward polar residues. Residues 681–714 (MKSTNSHTGSSQFSRAGSVPYKQRPPKVMGKTVP) form a disordered region. The chain crosses the membrane as a helical span at residues 731-751 (IIALVIIMAFSVISMTTLYVL). The Lumenal segment spans residues 752–1092 (NLRSEDDMLG…YYFRFYRLCD (341 aa)). Disordered regions lie at residues 798–817 (TTQL…SPDW) and 849–945 (ITRK…DSRY). 2 stretches are compositionally biased toward polar residues: residues 849 to 867 (ITRK…TDPA) and 928 to 945 (TPIT…DSRY). N-linked (GlcNAc...) asparagine glycosylation is found at N941, N961, N974, and N996.

It belongs to the MRF family. As to quaternary structure, homotrimer. Follows autocatalytic cleavage via the peptidase S74 domain. Autoprocessing is apparently constitutive and is essential for transcriptional activity.

Its subcellular location is the endoplasmic reticulum membrane. The protein resides in the nucleus. It localises to the cytoplasm. Constitutes a precursor of the transcription factor. Mediates the autocatalytic cleavage that releases the Myelin regulatory factor, N-terminal component that specifically activates transcription of central nervous system (CNS) myelin genes. Its function is as follows. Membrane-bound part that has no transcription factor activity and remains attached to the endoplasmic reticulum membrane following cleavage. Functionally, transcription factor that specifically activates expression of myelin genes during oligodendrocyte (OL) maturation, thereby playing a central role in oligodendrocyte maturation and CNS myelination. The chain is Myelin regulatory factor (myrf) from Xenopus laevis (African clawed frog).